Reading from the N-terminus, the 165-residue chain is uncharacterized protein (165 aa).

Residues 68-107 (LEGAPEWAAPHPEEQRRSPPACSQHTPPLPSTPTGPPPCS) are disordered. A compositionally biased stretch (pro residues) spans 94-107 (PPLPSTPTGPPPCS).

This is an uncharacterized protein from Homo sapiens (Human).